A 321-amino-acid polypeptide reads, in one-letter code: Ribonucleoside-diphosphate reductase small subunit (321 aa).

Fe cation is bound by residues Asp78, Glu108, and His111. Residue Tyr115 is part of the active site. Residues 165–185 (ILMILIEGLFFASSFASIAYL) traverse the membrane as a helical segment. Fe cation contacts are provided by Glu171, Glu205, and His208.

Belongs to the ribonucleoside diphosphate reductase small chain family. In terms of assembly, heterotetramer composed of a homodimer of the large subunit (R1) and a homodimer of the small subunit (R2). Larger multisubunit protein complex are also active, composed of (R1)n(R2)n. Requires Fe cation as cofactor.

Its subcellular location is the host membrane. It carries out the reaction a 2'-deoxyribonucleoside 5'-diphosphate + [thioredoxin]-disulfide + H2O = a ribonucleoside 5'-diphosphate + [thioredoxin]-dithiol. Ribonucleoside-diphosphate reductase holoenzyme provides the precursors necessary for viral DNA synthesis. Allows virus growth in non-dividing cells, as well as reactivation from latency in infected hosts. Catalyzes the biosynthesis of deoxyribonucleotides from the corresponding ribonucleotides. In Equus caballus (Horse), this protein is Ribonucleoside-diphosphate reductase small subunit.